A 451-amino-acid polypeptide reads, in one-letter code: tRNA modification GTPase MnmE (451 aa).

(6S)-5-formyl-5,6,7,8-tetrahydrofolate is bound by residues arginine 28, glutamate 85, and lysine 124. In terms of domain architecture, TrmE-type G spans 220–377 (GMNVVLVGQP…LRSELLRVAG (158 aa)). Asparagine 230 serves as a coordination point for K(+). Residues 230-235 (NVGKSS), 249-255 (TDIAGTT), and 274-277 (DTAG) contribute to the GTP site. Position 234 (serine 234) interacts with Mg(2+). The K(+) site is built by threonine 249, isoleucine 251, and threonine 254. A Mg(2+)-binding site is contributed by threonine 255. Lysine 451 provides a ligand contact to (6S)-5-formyl-5,6,7,8-tetrahydrofolate.

It belongs to the TRAFAC class TrmE-Era-EngA-EngB-Septin-like GTPase superfamily. TrmE GTPase family. Homodimer. Heterotetramer of two MnmE and two MnmG subunits. K(+) is required as a cofactor.

The protein localises to the cytoplasm. Exhibits a very high intrinsic GTPase hydrolysis rate. Involved in the addition of a carboxymethylaminomethyl (cmnm) group at the wobble position (U34) of certain tRNAs, forming tRNA-cmnm(5)s(2)U34. In Aromatoleum aromaticum (strain DSM 19018 / LMG 30748 / EbN1) (Azoarcus sp. (strain EbN1)), this protein is tRNA modification GTPase MnmE.